We begin with the raw amino-acid sequence, 103 residues long: Thioredoxin (103 aa).

The region spanning 1–103 (MVKEITDATF…ELDEVINKYV (103 aa)) is the Thioredoxin domain. A disulfide bridge links Cys-28 with Cys-31.

The protein belongs to the thioredoxin family.

Its function is as follows. Component of the thioredoxin-thioredoxin reductase system. Participates in various redox reactions through the reversible oxidation of its active center dithiol to a disulfide and catalyzes dithiol-disulfide exchange reactions. The sequence is that of Thioredoxin (trxA) from Listeria innocua serovar 6a (strain ATCC BAA-680 / CLIP 11262).